The sequence spans 136 residues: Small ribosomal subunit protein uS8c (136 aa).

Belongs to the universal ribosomal protein uS8 family. In terms of assembly, part of the 30S ribosomal subunit.

The protein resides in the plastid. Its subcellular location is the chloroplast. Its function is as follows. One of the primary rRNA binding proteins, it binds directly to 16S rRNA central domain where it helps coordinate assembly of the platform of the 30S subunit. The sequence is that of Small ribosomal subunit protein uS8c (rps8) from Tetradesmus obliquus (Green alga).